Here is a 108-residue protein sequence, read N- to C-terminus: UPF0145 protein Tery_3795 (108 aa).

Belongs to the UPF0145 family.

This is UPF0145 protein Tery_3795 from Trichodesmium erythraeum (strain IMS101).